A 36-amino-acid polypeptide reads, in one-letter code: Photosystem II reaction center protein M (36 aa).

M1 bears the Blocked amino end (Met) mark. The Lumenal segment spans residues 1-11 (MEVNQLGFIAT). The helical transmembrane segment at 12-27 (ALFVLVPSVFLIILYV) threads the bilayer. At 28–36 (QTESQQKSS) the chain is on the cytoplasmic side.

It belongs to the PsbM family. PSII is composed of 1 copy each of membrane proteins PsbA, PsbB, PsbC, PsbD, PsbE, PsbF, PsbH, PsbI, PsbJ, PsbK, PsbL, PsbM, PsbT, PsbX, PsbY, PsbZ, Psb30/Ycf12, peripheral proteins PsbO, CyanoQ (PsbQ), PsbU, PsbV, PsbU, PsbV and a large number of cofactors. It forms dimeric complexes. PSII binds multiple chlorophylls, carotenoids and specific lipids. serves as cofactor.

The protein localises to the cellular thylakoid membrane. In terms of biological role, one of the components of the core complex of photosystem II (PSII). PSII is a light-driven water:plastoquinone oxidoreductase that uses light energy to abstract electrons from H(2)O, generating O(2) and a proton gradient subsequently used for ATP formation. It consists of a core antenna complex that captures photons, and an electron transfer chain that converts photonic excitation into a charge separation. This subunit is found at the monomer-monomer interface. Probably involved in dimerization of PSII; at the monomer-monomer interface the only protein-protein contacts observed are between the 2 PsbM subunits. Lipids, chlorophylls and carotenoids contribute strongly to PSII dimerization. This is Photosystem II reaction center protein M from Thermostichus vulcanus (Synechococcus vulcanus).